The following is a 572-amino-acid chain: Urease subunit alpha (572 aa).

Positions 136–572 (GGIDTHIHWI…VPLAQRYFLF (437 aa)) constitute a Urease domain. Ni(2+) is bound by residues H141, H143, and K224. Position 224 is an N6-carboxylysine (K224). H226 is a substrate binding site. Residues H253 and H279 each coordinate Ni(2+). H327 (proton donor) is an active-site residue. D367 is a Ni(2+) binding site.

The protein belongs to the metallo-dependent hydrolases superfamily. Urease alpha subunit family. Heterotrimer of UreA (gamma), UreB (beta) and UreC (alpha) subunits. Three heterotrimers associate to form the active enzyme. Ni cation is required as a cofactor. In terms of processing, carboxylation allows a single lysine to coordinate two nickel ions.

It localises to the cytoplasm. The catalysed reaction is urea + 2 H2O + H(+) = hydrogencarbonate + 2 NH4(+). It functions in the pathway nitrogen metabolism; urea degradation; CO(2) and NH(3) from urea (urease route): step 1/1. This Actinobacillus pleuropneumoniae (Haemophilus pleuropneumoniae) protein is Urease subunit alpha.